A 485-amino-acid polypeptide reads, in one-letter code: Trk system potassium uptake protein TrkH (485 aa).

Residues 1-2 are Cytoplasmic-facing; the sequence is MQ. A helical membrane pass occupies residues 3–29; it reads FRSIIRIVGLLLALFSVTMLAPALVAL. Residues 30 to 35 lie on the Periplasmic side of the membrane; that stretch reads LYRDGA. The helical transmembrane segment at 36 to 57 threads the bilayer; the sequence is GVPFVTTFFVLLFCGAMCWFPN. Residues 58–65 are Cytoplasmic-facing; that stretch reads RRHKHELK. A helical transmembrane segment spans residues 66-90; it reads SRDGFLIVVLFWTVLGSAGSLPFLI. The segment at residues 98–109 is an intramembrane region (helical; Pore-forming); the sequence is VTDAFFESFSAL. An intramembrane segment occupies 110–115; sequence TTTGAT. Residues 110–115 form a selectivity filter part 1 region; it reads TTTGAT. K(+)-binding residues include Thr-111 and Thr-112. Residues 116–124 are Periplasmic-facing; that stretch reads VIVGLDELP. The chain crosses the membrane as a helical span at residues 125–150; it reads KAILFYRQFLQWFGGMGIIVLAVAIL. At 151-177 the chain is on the cytoplasmic side; the sequence is PVLGIGGMQLYRAEIPGPVKDTKMTPR. Residues 178-202 traverse the membrane as a helical segment; the sequence is IAETAKALWYIYLSLTIACAVAFWL. The Periplasmic segment spans residues 203–205; sequence AGM. Thr-206 is an intramembrane region. Residues 207–218 constitute an intramembrane region (helical; Pore-forming); it reads PFDAISHSFSTI. The stretch at 219–224 is an intramembrane region; the sequence is AIGGFS. Residues 219–224 are selectivity filter part 2; it reads AIGGFS. Positions 220 and 221 each coordinate K(+). Residues 225–234 lie on the Periplasmic side of the membrane; it reads THDASMGYFD. Positions 235-250 form an intramembrane region, helical; that stretch reads SYAINLITVVFLLISA. Residues 276–296 form a helical membrane-spanning segment; it reads FRAFIFIQVLLFLVCFLLLLK. Residues 303–318 constitute an intramembrane region (helical; Pore-forming); it reads PYDAFDQALFQTVSIS. The stretch at 319–324 is an intramembrane region; it reads TTAGFT. Residues 319–324 form a selectivity filter part 3 region; that stretch reads TTAGFT. K(+) is bound by residues Thr-320 and Ala-321. Topologically, residues 325 to 332 are periplasmic; it reads TTGFADWP. The segment at residues 333-344 is an intramembrane region (helical); it reads LFLPVLLLFSSF. The segment at residues 345 to 357 is an intramembrane region (note=Loop between two helices); the sequence is IGGCAGSTGGGMK. The helical transmembrane segment at 392–419 threads the bilayer; the sequence is PQRVVDAVWGFFSAYALVFVVCMLGLIA. Topologically, residues 420-421 are periplasmic; it reads TG. The stretch at 422-423 is an intramembrane region; sequence MD. Positions 424–434 form an intramembrane region, helical; Pore-forming; that stretch reads ELSAFSAVAAT. An intramembrane segment occupies 435–441; sequence LNNLGPG. The segment at 436 to 441 is selectivity filter part 4; the sequence is NNLGPG. Residues Asn-437 and Leu-438 each contribute to the K(+) site. Residues 442 to 453 are Periplasmic-facing; that stretch reads LGEVALHFGDVN. Positions 454–465 form an intramembrane region, helical; it reads DKAKWVLIVSML.

This sequence belongs to the TrkH potassium transport family. As to quaternary structure, homodimer.

Its subcellular location is the cell inner membrane. Low-affinity potassium transport system. Interacts with trk system potassium uptake protein TrkA and requires TrkE for transport activity. Selective for permeation of potassium ion and rubidium ion over smaller ions such as natrium or litium. The chain is Trk system potassium uptake protein TrkH from Vibrio parahaemolyticus serotype O3:K6 (strain RIMD 2210633).